A 191-amino-acid chain; its full sequence is Dephospho-CoA kinase (191 aa).

Residues 3–191 enclose the DPCK domain; that stretch reads AIGITGSYAS…KLIKNLECQV (189 aa). 11–16 contacts ATP; sequence ASGKTF.

This sequence belongs to the CoaE family.

It is found in the cytoplasm. The enzyme catalyses 3'-dephospho-CoA + ATP = ADP + CoA + H(+). It functions in the pathway cofactor biosynthesis; coenzyme A biosynthesis; CoA from (R)-pantothenate: step 5/5. In terms of biological role, catalyzes the phosphorylation of the 3'-hydroxyl group of dephosphocoenzyme A to form coenzyme A. The protein is Dephospho-CoA kinase of Rickettsia typhi (strain ATCC VR-144 / Wilmington).